Reading from the N-terminus, the 439-residue chain is Putative phosphatidate cytidylyltransferase (439 aa).

The tract at residues 1–37 is disordered; it reads MARKRTNKRNNSDKENGNVGVVQNKDSASSKTTEPAR. Ser-12 is subject to Phosphoserine. The segment covering 24-33 has biased composition (polar residues); that stretch reads NKDSASSKTT. The next 7 membrane-spanning stretches (helical) occupy residues 52–71, 76–98, 110–130, 145–165, 180–199, 245–265, and 321–341; these read FITR…TALA, WVVL…IASV, FINW…SIYA, LVLH…VLFV, FCWT…FMIN, GFLG…YVLM, and FHLA…GFFA.

Belongs to the CDS family. Mg(2+) is required as a cofactor.

It localises to the endoplasmic reticulum membrane. It carries out the reaction a 1,2-diacyl-sn-glycero-3-phosphate + CTP + H(+) = a CDP-1,2-diacyl-sn-glycerol + diphosphate. It participates in phospholipid metabolism; CDP-diacylglycerol biosynthesis; CDP-diacylglycerol from sn-glycerol 3-phosphate: step 3/3. Its function is as follows. Supplies CDP-diacylglycerol, which may play an important role as both a precursor to phosphoinositide biosynthesis in the plasma membrane and as a negative effector of phosphatidylinositol 4-kinase activity, thereby exerting an effect on cell proliferation via a lipid-dependent signal transduction cascade. The polypeptide is Putative phosphatidate cytidylyltransferase (Schizosaccharomyces pombe (strain 972 / ATCC 24843) (Fission yeast)).